The chain runs to 380 residues: LYCKEHGILPDGRLDQNRMDDESAESFFSQTSVGTYVPRTLMVDLEPGVLESIKTGKYRELYHPGQLISGKEDAANNYARGHYTVGKEIIEPVMEQIRRMADNCDGLQGFLIYHSFGGGTGSGFASLMMDRLAAEFGKKSKLEFSVYPAPKIATAVVEPYNSILTTHTTLDYSDCSFLVDNEAIYDMCRNLGIQRPYYTDINRIIAQVVSSITASLRFPGSLNVDLTEFQTNLVPYPRIHFPLVAYSPMLSKEKAAHEKLSVQEITNACFEPQSQMVRCDTRKGKYMACCLLFRGDVNPKDANTATANVKAKRTNQFVEWCPTGFKVGINSRKPTVLDGEAMAEVSRAVCALSNTTAISEAWKRLNNKFDLMFSKRAFVH.

7 residues coordinate GTP: glutamate 46, serine 115, glycine 119, threonine 120, threonine 154, asparagine 181, and asparagine 202. A Mg(2+)-binding site is contributed by glutamate 46. Residue glutamate 228 is part of the active site.

The protein belongs to the tubulin family. In terms of assembly, dimer of alpha and beta chains. A typical microtubule is a hollow water-filled tube with an outer diameter of 25 nm and an inner diameter of 15 nM. Alpha-beta heterodimers associate head-to-tail to form protofilaments running lengthwise along the microtubule wall with the beta-tubulin subunit facing the microtubule plus end conferring a structural polarity. Microtubules usually have 13 protofilaments but different protofilament numbers can be found in some organisms and specialized cells. The cofactor is Mg(2+).

It localises to the cytoplasm. Its subcellular location is the cytoskeleton. The enzyme catalyses GTP + H2O = GDP + phosphate + H(+). Functionally, tubulin is the major constituent of microtubules, a cylinder consisting of laterally associated linear protofilaments composed of alpha- and beta-tubulin heterodimers. Microtubules grow by the addition of GTP-tubulin dimers to the microtubule end, where a stabilizing cap forms. Below the cap, tubulin dimers are in GDP-bound state, owing to GTPase activity of alpha-tubulin. The polypeptide is Tubulin alpha chain (TUB1) (Encephalitozoon hellem (Microsporidian parasite)).